Reading from the N-terminus, the 181-residue chain is Diphosphoinositol polyphosphate phosphohydrolase NUDT4B (181 aa).

Substrate is bound by residues Arg-10, 18–20, and 39–41; these read KKR and SSR. Residues 18-145 enclose the Nudix hydrolase domain; it reads KKRAACLCFR…VHAEYLEKLK (128 aa). Mg(2+)-binding residues include Gly-50 and Glu-66. The Nudix box motif lies at 51–72; the sequence is GGMEPEEEPGGAAVREVYEEAG. Glu-69 functions as the Proton acceptor in the catalytic mechanism. Glu-70 lines the Mg(2+) pocket. Residues 90–92, Arg-116, and Lys-134 contribute to the substrate site; that span reads RKH.

The protein belongs to the Nudix hydrolase family. DIPP subfamily. The cofactor is Mg(2+). Mn(2+) is required as a cofactor.

It is found in the cytoplasm. The catalysed reaction is diphospho-myo-inositol polyphosphate + H2O = myo-inositol polyphosphate + phosphate.. Cleaves a beta-phosphate from the diphosphate groups in PP-InsP5 (diphosphoinositol pentakisphosphate), PP-InsP4 and [PP]2-InsP4 (bisdiphosphoinositol tetrakisphosphate), suggesting that it may play a role in signal transduction. Also able to catalyze the hydrolysis of dinucleoside oligophosphate Ap6A, but not Ap5A. The major reaction products are ADP and p4a from Ap6A. Also able to hydrolyze 5-phosphoribose 1-diphosphate. Does not play a role in U8 snoRNA decapping activity. Binds U8 snoRNA. The polypeptide is Diphosphoinositol polyphosphate phosphohydrolase NUDT4B (Homo sapiens (Human)).